We begin with the raw amino-acid sequence, 473 residues long: Photosystem II CP43 reaction center protein (473 aa).

Residues 1–14 constitute a propeptide that is removed on maturation; sequence MKTLYSLRRFYHVE. Thr-15 bears the N-acetylthreonine mark. Thr-15 bears the Phosphothreonine mark. The next 5 helical transmembrane spans lie at 69-93, 134-155, 178-200, 255-275, and 291-312; these read LFEV…PHLA, LLGP…KDRN, KASY…RKIT, KPFA…LSYS, and WFNN…ASQA. Glu-367 provides a ligand contact to [CaMn4O5] cluster. The chain crosses the membrane as a helical span at residues 447-471; it reads RARAAAAGFEKGIDRDFEPVLSMTP.

It belongs to the PsbB/PsbC family. PsbC subfamily. In terms of assembly, PSII is composed of 1 copy each of membrane proteins PsbA, PsbB, PsbC, PsbD, PsbE, PsbF, PsbH, PsbI, PsbJ, PsbK, PsbL, PsbM, PsbT, PsbX, PsbY, PsbZ, Psb30/Ycf12, at least 3 peripheral proteins of the oxygen-evolving complex and a large number of cofactors. It forms dimeric complexes. Binds multiple chlorophylls and provides some of the ligands for the Ca-4Mn-5O cluster of the oxygen-evolving complex. It may also provide a ligand for a Cl- that is required for oxygen evolution. PSII binds additional chlorophylls, carotenoids and specific lipids. serves as cofactor.

The protein localises to the plastid. It is found in the chloroplast thylakoid membrane. One of the components of the core complex of photosystem II (PSII). It binds chlorophyll and helps catalyze the primary light-induced photochemical processes of PSII. PSII is a light-driven water:plastoquinone oxidoreductase, using light energy to abstract electrons from H(2)O, generating O(2) and a proton gradient subsequently used for ATP formation. This chain is Photosystem II CP43 reaction center protein, found in Cicer arietinum (Chickpea).